The following is an 85-amino-acid chain: Large ribosomal subunit protein bL27 (85 aa).

The segment at 1-20 (MAHKKAGGSSRNGRDSEAKR) is disordered.

The protein belongs to the bacterial ribosomal protein bL27 family.

The chain is Large ribosomal subunit protein bL27 from Aeromonas salmonicida (strain A449).